A 328-amino-acid chain; its full sequence is Nickel import system permease protein NikB (328 aa).

6 helical membrane-spanning segments follow: residues leucine 11 to leucine 31, leucine 104 to isoleucine 124, valine 139 to isoleucine 159, isoleucine 170 to isoleucine 190, isoleucine 229 to valine 249, and valine 279 to leucine 299. In terms of domain architecture, ABC transmembrane type-1 spans alanine 100 to threonine 297.

It belongs to the binding-protein-dependent transport system permease family. OppBC subfamily. In terms of assembly, the complex is composed of two ATP-binding proteins (NikD and NikE), two transmembrane proteins (NikB and NikC) and a solute-binding protein (NikA).

The protein localises to the cell membrane. Its function is as follows. Part of the ABC transporter complex NikABCDE (Opp2) involved in nickel import. Probably responsible for the translocation of the substrate across the membrane. This is Nickel import system permease protein NikB from Staphylococcus aureus (strain USA300).